Reading from the N-terminus, the 401-residue chain is Nicotinate phosphoribosyltransferase (401 aa).

Histidine 221 is modified (phosphohistidine; by autocatalysis).

It belongs to the NAPRTase family. Transiently phosphorylated on a His residue during the reaction cycle. Phosphorylation strongly increases the affinity for substrates and increases the rate of nicotinate D-ribonucleotide production. Dephosphorylation regenerates the low-affinity form of the enzyme, leading to product release.

The catalysed reaction is nicotinate + 5-phospho-alpha-D-ribose 1-diphosphate + ATP + H2O = nicotinate beta-D-ribonucleotide + ADP + phosphate + diphosphate. The protein operates within cofactor biosynthesis; NAD(+) biosynthesis; nicotinate D-ribonucleotide from nicotinate: step 1/1. In terms of biological role, catalyzes the synthesis of beta-nicotinate D-ribonucleotide from nicotinate and 5-phospho-D-ribose 1-phosphate at the expense of ATP. This chain is Nicotinate phosphoribosyltransferase, found in Edwardsiella ictaluri (strain 93-146).